The sequence spans 376 residues: Inactive CLIP domain-containing serine protease A28 (376 aa).

Residues 1–19 (MKVLLFCIVISLTTLIASG) form the signal peptide. The region spanning 24–80 (EELRCPGGYCVSKYLCPNGTFIDDIKHAQTTQLIGLRAGLDIDDFDDCNDYLLVCCQ) is the Clip domain. Intrachain disulfides connect cysteine 28-cysteine 78, cysteine 33-cysteine 71, and cysteine 39-cysteine 79. N-linked (GlcNAc...) asparagine glycosylation occurs at asparagine 41. The segment at 85 to 106 (PTATSTEKPATSDELIEPPPST) is disordered. The 251-residue stretch at 114–364 (NEGGLIYDLR…YVQWLNEHIV (251 aa)) folds into the Peptidase S1 domain. Asparagine 125 and asparagine 279 each carry an N-linked (GlcNAc...) asparagine glycan. 3 cysteine pairs are disulfide-bonded: cysteine 251/cysteine 321, cysteine 280/cysteine 301, and cysteine 311/cysteine 340. The N-linked (GlcNAc...) asparagine glycan is linked to asparagine 369.

This sequence belongs to the peptidase S1 family. CLIP subfamily. May form a heterodimer of a light chain and a heavy chain; disulfide-linked. Post-translationally, secreted as a full-length protein. Proteolytically cleaved into two chains which probably remain covalently linked. Cleavage is induced by fungus B.bassiana and Gram-positive or Gram-negative bacteria infection.

It localises to the secreted. Functionally, inactive serine protease which plays an essential role in the innate immune response against bacteria, fungi and protozoa infection by activating the melanization cascade. In the melanization cascade, acts downstream of TEP1, SPCLIP1 and CLIPA8 to promote CLIPC9 proteolytic cleavage. In the susceptible strain G3, appears to be dispensable for parasite P.berghei ookinete elimination which occurs by lysis. Required for the melanization of Gram-positive and Gram-negative bacteria. Required for the melanization of fungus B.bassiana. This chain is Inactive CLIP domain-containing serine protease A28, found in Anopheles gambiae (African malaria mosquito).